The following is a 102-amino-acid chain: NADH-quinone oxidoreductase subunit K (102 aa).

3 helical membrane-spanning segments follow: residues 5-25 (LGHF…GIFL), 31-51 (IVLL…FVAF), and 62-82 (IFVF…LALL).

Belongs to the complex I subunit 4L family. As to quaternary structure, NDH-1 is composed of 14 different subunits. Subunits NuoA, H, J, K, L, M, N constitute the membrane sector of the complex.

The protein resides in the cell inner membrane. It carries out the reaction a quinone + NADH + 5 H(+)(in) = a quinol + NAD(+) + 4 H(+)(out). NDH-1 shuttles electrons from NADH, via FMN and iron-sulfur (Fe-S) centers, to quinones in the respiratory chain. The immediate electron acceptor for the enzyme in this species is believed to be ubiquinone. Couples the redox reaction to proton translocation (for every two electrons transferred, four hydrogen ions are translocated across the cytoplasmic membrane), and thus conserves the redox energy in a proton gradient. The sequence is that of NADH-quinone oxidoreductase subunit K from Variovorax paradoxus (strain S110).